Consider the following 637-residue polypeptide: Tumor protein p73 (637 aa).

Positions 1 to 46 are transactivation; it reads MAQSTTTSPDGGTTFEHLWSSLEPDSTYFDLPQSSRGNNEVVGGTD. Residue Thr-27 is modified to Phosphothreonine. Tyr-28 carries the post-translational modification Phosphotyrosine; by SRC and HCK. A disordered region spans residues 78 to 104; sequence RAASASPYTPEHAASVPTHSPYAQPSS. Residues 94-104 show a composition bias toward polar residues; it reads PTHSPYAQPSS. A Phosphotyrosine modification is found at Tyr-99. The segment at 131-310 is DNA-binding; sequence FQQSSTAKSA…DRKADEDHYR (180 aa). Zn(2+) is bound by residues Cys-194, His-197, Cys-258, and Cys-262. The segment covering 301-311 has biased composition (basic and acidic residues); it reads DRKADEDHYRE. The tract at residues 301–351 is disordered; sequence DRKADEDHYREQQALNESSAKNGAASKRAFKQSPPAVPALGPGVKKRRHGD. Residues 345–380 form an interaction with HIPK2 region; sequence KKRRHGDEDTYYLQVRGRENFEILMKLKESLELMEL. The tract at residues 345–386 is oligomerization; that stretch reads KKRRHGDEDTYYLQVRGRENFEILMKLKESLELMELVPQPLV. The PPxY motif signature appears at 483–487; sequence PPPPY. The SAM domain occupies 485-551; the sequence is PPYHADPSLV…WRGLQDLKQG (67 aa). Lys-628 is covalently cross-linked (Glycyl lysine isopeptide (Lys-Gly) (interchain with G-Cter in SUMO); in isoform Alpha). A Glycyl lysine isopeptide (Lys-Gly) (interchain with G-Cter in SUMO2) cross-link involves residue Lys-628.

The protein belongs to the p53 family. In terms of assembly, found in a complex with p53/TP53 and CABLES1. The C-terminal oligomerization domain binds to the ABL1 tyrosine kinase SH3 domain. Interacts with HECW2. Isoforms Alpha and Beta interact with HIPK2. Isoform Alpha interacts with RANBP9. Interacts with WWOX. Isoform Beta interacts homotypically and with p53, whereas isoform Alpha does not. Interacts (via SAM domain) with FBXO45 (via B30.2/SPRY domain). Interacts with YAP1 (phosphorylated form). Interacts with HCK (via SH3 domain); this inhibits TP73 activity and degradation. Requires Zn(2+) as cofactor. Post-translationally, isoform Alpha (but not isoform Beta) is sumoylated on Lys-628, which potentiates proteasomal degradation but does not affect transcriptional activity. Polyubiquitinated by RCHY1/PIRH2; leading to its degradation by the proteasome.

It localises to the nucleus. It is found in the cytoplasm. Participates in the apoptotic response to DNA damage. May be a tumor suppressor protein. Is an activator of FOXJ1 expression, essential for the positive regulation of lung ciliated cell differentiation. The sequence is that of Tumor protein p73 (TP73) from Chlorocebus aethiops (Green monkey).